The chain runs to 827 residues: Histone acetyltransferase MOF (827 aa).

Disordered stretches follow at residues 1–190 (MSEA…SDTV), 237–276 (QLGLPLAAPPPPPPPPAAEQVPETPASPTDDGEEPPAVYL), 288–309 (STPGLPTRLAPRDPRQRNMPPP), and 324–360 (EAISDDSSETSSSDDDEEEEEDEDDALTMEHDNTSRE). Residues 19 to 30 (PIEEEHEPEQEP) show a composition bias toward acidic residues. The span at 55–69 (LDVSGSDQSAEQSLD) shows a compositional bias: polar residues. Positions 103 to 116 (SSTSTSSTRSSSSS) are enriched in low complexity. Over residues 121–133 (VSEAEEAPPEPEP) the composition is skewed to acidic residues. A compositionally biased stretch (basic and acidic residues) spans 141-150 (QEEKKEDGQD). The span at 176–186 (DQEIETEDEPS) shows a compositional bias: acidic residues. Residues 243–253 (AAPPPPPPPPA) are compositionally biased toward pro residues. The segment covering 326-350 (ISDDSSETSSSDDDEEEEEDEDDAL) has biased composition (acidic residues). A Glycyl lysine isopeptide (Lys-Gly) (interchain with G-Cter in ubiquitin) cross-link involves residue lysine 372. Positions 382–433 (IYFIRREDGTVHRGQVLQSRTTENAAAPDEYYVHYVGLNRRLDGWVGRHRIS) constitute a Tudor-knot domain. Residues lysine 483, lysine 532, and lysine 539 each participate in a glycyl lysine isopeptide (Lys-Gly) (interchain with G-Cter in ubiquitin) cross-link. An MYST-type HAT domain is found at 538–813 (TKIKYIDKLQ…IDTDYLVWSP (276 aa)). The C2HC MYST-type zinc-finger motif lies at 571-596 (LYVCEYCLKYMRFRSSYAYHLHECDR). The Zn(2+) site is built by cysteine 574, cysteine 577, histidine 590, and cysteine 594. Position 638 is an N6-acetyllysine; by autocatalysis (lysine 638). Residues isoleucine 681, arginine 689, lysine 690, glycine 691, glycine 693, and lysine 694 each coordinate acetyl-CoA. Glutamate 714 serves as the catalytic Proton donor/acceptor. Lysine 715 is covalently cross-linked (Glycyl lysine isopeptide (Lys-Gly) (interchain with G-Cter in ubiquitin)). Acetyl-CoA is bound by residues serine 718 and serine 727. A Glycyl lysine isopeptide (Lys-Gly) (interchain with G-Cter in ubiquitin) cross-link involves residue lysine 749. Tyrosine 774 lines the acetyl-CoA pocket. Glycyl lysine isopeptide (Lys-Gly) (interchain with G-Cter in ubiquitin) cross-links involve residues lysine 776, lysine 798, and lysine 801. Lysine 798 provides a ligand contact to acetyl-CoA.

The protein belongs to the MYST (SAS/MOZ) family. As to quaternary structure, component of the male-specific lethal (MSL) histone acetyltransferase complex, composed of mof, mle, msl-1, msl-2 and msl-3 proteins, as well as roX1 and roX2 non-coding RNAs. Component of a maternal MSL subcomplex composed of mof, msl-1 and msl-3. Component of the non-specific lethal (NLS) histone acetyltransferase complex at least composed of mof, nls1, dgt1/NSL2, Rcd1/NSL3, Rcd5/MCRS2, MBD-R2 and wds. In males, interacts with nucleoporin Mgtor. Autoacetylation at Lys-638 is required for binding histone H4 with high affinity and for proper function. In terms of processing, ubiquitinated by msl-2.

It localises to the nucleus. The protein resides in the chromosome. The enzyme catalyses L-lysyl-[histone] + acetyl-CoA = N(6)-acetyl-L-lysyl-[histone] + CoA + H(+). Its function is as follows. Histone acetyltransferase that catalyzes the formation of the majority of histone H4 acetylation at 'Lys-16' (H4K16ac), an epigenetic mark that prevents chromatin compaction and constitutes the only acetylation mark intergenerationally transmitted. Catalytic component of the male-specific lethal (MSL) complex, a multiprotein complex essential for elevating transcription of the single X chromosome in the male (X chromosome dosage compensation). The MSL complex specifically associates with the single X chromosome in males and mediates formation of H4K16ac, promoting a two-fold activation of X chromosome. Dosage compensation ensures that males with a single X chromosome have the same amount of most X-linked gene products as females with two X chromosomes. In oocytes, mof is also part of a maternal MSL subcomplex that mediates H4K16ac deposition for intergenerational transmission: H4K16ac prepares the chromatin landscape for establishment of nucleosome accessibility and poises genes for future activation. H4K16ac constitutes the only acetylation mark maintained from oocytes to fertilized embryos. Mof also constitutes the catalytic component of the non-specific lethal (NLS) complex, which promotes expression of housekeeping genes on X chromosome and autosomes. The NSL complex promotes strong expression of housekeeping genes compared to the two-fold expression mediated by the MSL complex on X chromosome, suggesting that the activation potential of mof is constrained in the context of dosage compensation. The protein is Histone acetyltransferase MOF of Drosophila melanogaster (Fruit fly).